We begin with the raw amino-acid sequence, 203 residues long: MTQYTFSPKDFKAFEVEGLDQRMEALNDYVRPQLHQLGSYFEEYFTTQTGETFYAHVAKHARRSVNPPIDTWVAFAPNKRGYKMLPHFQIGLFRNQLFIMFGIMHEGRNKEEKVKIFDKHFDKLTSLPSDYSVSLDHMKTEKHYIKDMSNEELHAAIDRVKNVKKGEFFVARTLSPTDKRLKSDKSFLKFVEETFDEFLKFYQ.

It belongs to the UPF0637 family.

This chain is UPF0637 protein SERP0693, found in Staphylococcus epidermidis (strain ATCC 35984 / DSM 28319 / BCRC 17069 / CCUG 31568 / BM 3577 / RP62A).